Here is a 279-residue protein sequence, read N- to C-terminus: Putative pyruvate, phosphate dikinase regulatory protein (279 aa).

153–160 (GVSRTSKT) is an ADP binding site.

It belongs to the pyruvate, phosphate/water dikinase regulatory protein family. PDRP subfamily.

The enzyme catalyses N(tele)-phospho-L-histidyl/L-threonyl-[pyruvate, phosphate dikinase] + ADP = N(tele)-phospho-L-histidyl/O-phospho-L-threonyl-[pyruvate, phosphate dikinase] + AMP + H(+). It carries out the reaction N(tele)-phospho-L-histidyl/O-phospho-L-threonyl-[pyruvate, phosphate dikinase] + phosphate + H(+) = N(tele)-phospho-L-histidyl/L-threonyl-[pyruvate, phosphate dikinase] + diphosphate. Functionally, bifunctional serine/threonine kinase and phosphorylase involved in the regulation of the pyruvate, phosphate dikinase (PPDK) by catalyzing its phosphorylation/dephosphorylation. In Bradyrhizobium sp. (strain ORS 278), this protein is Putative pyruvate, phosphate dikinase regulatory protein.